Reading from the N-terminus, the 303-residue chain is Protoheme IX farnesyltransferase (303 aa).

6 consecutive transmembrane segments (helical) span residues 25 to 45, 54 to 74, 118 to 138, 166 to 186, 230 to 250, and 280 to 300; these read MGLVQGNLIPAFAGAWLAIVM, IPQILLMLVGSTLIMGGACAL, CLFLLNIPSGVLGLIGIVGYV, IGWVAIDGSLSLAAVALFLVV, LVLLLPLPFLLSNLGVTFVVI, and FVYSLNYLVVFFALVVVVSLI.

This sequence belongs to the UbiA prenyltransferase family. Protoheme IX farnesyltransferase subfamily. As to quaternary structure, interacts with CtaA.

The protein localises to the cell membrane. The catalysed reaction is heme b + (2E,6E)-farnesyl diphosphate + H2O = Fe(II)-heme o + diphosphate. It functions in the pathway porphyrin-containing compound metabolism; heme O biosynthesis; heme O from protoheme: step 1/1. Converts heme B (protoheme IX) to heme O by substitution of the vinyl group on carbon 2 of heme B porphyrin ring with a hydroxyethyl farnesyl side group. The sequence is that of Protoheme IX farnesyltransferase from Staphylococcus epidermidis (strain ATCC 12228 / FDA PCI 1200).